Consider the following 303-residue polypeptide: GPN-loop GTPase 2 (303 aa).

A GTP-binding site is contributed by 29–34; sequence GSGKST. Residues 85-87 carry the Gly-Pro-Asn (GPN)-loop; involved in dimer interface motif; sequence GPN. 187-190 lines the GTP pocket; the sequence is SKMD.

The protein belongs to the GPN-loop GTPase family. As to quaternary structure, heterodimers with gpn1 or gpn3. Binds to RNA polymerase II (RNAPII).

Functionally, small GTPase required for proper localization of RNA polymerase II and III (RNAPII and RNAPIII). May act at an RNAP assembly step prior to nuclear import. This is GPN-loop GTPase 2 from Xenopus tropicalis (Western clawed frog).